The chain runs to 283 residues: UPF0276 protein Nmul_A2550 (283 aa).

This sequence belongs to the UPF0276 family.

In Nitrosospira multiformis (strain ATCC 25196 / NCIMB 11849 / C 71), this protein is UPF0276 protein Nmul_A2550.